The following is a 477-amino-acid chain: Ribulose bisphosphate carboxylase large chain (477 aa).

The propeptide occupies 1-2; it reads MS. Pro3 carries the N-acetylproline modification. Lys14 carries the N6,N6,N6-trimethyllysine modification. The substrate site is built by Asn123 and Thr173. Lys175 acts as the Proton acceptor in catalysis. Lys177 lines the substrate pocket. The Mg(2+) site is built by Lys201, Asp203, and Glu204. The residue at position 201 (Lys201) is an N6-carboxylysine. The active-site Proton acceptor is His294. Substrate is bound by residues Arg295, His327, and Ser379.

It belongs to the RuBisCO large chain family. Type I subfamily. Heterohexadecamer of 8 large chains and 8 small chains; disulfide-linked. The disulfide link is formed within the large subunit homodimers. Requires Mg(2+) as cofactor. Post-translationally, the disulfide bond which can form in the large chain dimeric partners within the hexadecamer appears to be associated with oxidative stress and protein turnover.

It is found in the plastid. The protein resides in the chloroplast. It catalyses the reaction 2 (2R)-3-phosphoglycerate + 2 H(+) = D-ribulose 1,5-bisphosphate + CO2 + H2O. The catalysed reaction is D-ribulose 1,5-bisphosphate + O2 = 2-phosphoglycolate + (2R)-3-phosphoglycerate + 2 H(+). Functionally, ruBisCO catalyzes two reactions: the carboxylation of D-ribulose 1,5-bisphosphate, the primary event in carbon dioxide fixation, as well as the oxidative fragmentation of the pentose substrate in the photorespiration process. Both reactions occur simultaneously and in competition at the same active site. In Oryza nivara (Indian wild rice), this protein is Ribulose bisphosphate carboxylase large chain.